We begin with the raw amino-acid sequence, 301 residues long: Galectin-6 (301 aa).

Galectin domains are found at residues Y19 to F149 and Y173 to I301.

This chain is Galectin-6 (Lgals6), found in Mus musculus (Mouse).